We begin with the raw amino-acid sequence, 159 residues long: Ribosomal RNA large subunit methyltransferase H (159 aa).

Residues Leu-76, Gly-108, and 127–132 (FSKMTF) contribute to the S-adenosyl-L-methionine site.

The protein belongs to the RNA methyltransferase RlmH family. In terms of assembly, homodimer.

It localises to the cytoplasm. It carries out the reaction pseudouridine(1915) in 23S rRNA + S-adenosyl-L-methionine = N(3)-methylpseudouridine(1915) in 23S rRNA + S-adenosyl-L-homocysteine + H(+). Functionally, specifically methylates the pseudouridine at position 1915 (m3Psi1915) in 23S rRNA. This is Ribosomal RNA large subunit methyltransferase H from Halalkalibacterium halodurans (strain ATCC BAA-125 / DSM 18197 / FERM 7344 / JCM 9153 / C-125) (Bacillus halodurans).